The following is a 766-amino-acid chain: Coenzyme PQQ synthesis protein F (766 aa).

Histidine 49 serves as a coordination point for Zn(2+). Glutamate 52 (proton acceptor) is an active-site residue. Histidine 53 and glutamate 130 together coordinate Zn(2+).

It belongs to the peptidase M16 family. Zn(2+) is required as a cofactor.

It participates in cofactor biosynthesis; pyrroloquinoline quinone biosynthesis. Functionally, required for coenzyme pyrroloquinoline quinone (PQQ) biosynthesis. It is thought that this protein is a protease that cleaves peptides bond in a small peptide (gene pqqA), providing the glutamate and tyrosine residues which are necessary for the synthesis of PQQ. In Pseudomonas putida (strain ATCC 47054 / DSM 6125 / CFBP 8728 / NCIMB 11950 / KT2440), this protein is Coenzyme PQQ synthesis protein F (pqqF).